Consider the following 199-residue polypeptide: Holliday junction branch migration complex subunit RuvA (199 aa).

Residues 1 to 63 (MIGCLIGEVF…EDAQQLYGFS (63 aa)) form a domain I region. Residues 64-142 (DAQEKTIFRT…TLAQGTSSAA (79 aa)) form a domain II region. The tract at residues 143–150 (ALPQIQFV) is flexible linker. Residues 150–199 (VSNSPVAEAEAALQSLGYKPLEAQKAVAAVKADYTESADIIRAALKSMMK) form a domain III region.

It belongs to the RuvA family. In terms of assembly, homotetramer. Forms an RuvA(8)-RuvB(12)-Holliday junction (HJ) complex. HJ DNA is sandwiched between 2 RuvA tetramers; dsDNA enters through RuvA and exits via RuvB. An RuvB hexamer assembles on each DNA strand where it exits the tetramer. Each RuvB hexamer is contacted by two RuvA subunits (via domain III) on 2 adjacent RuvB subunits; this complex drives branch migration. In the full resolvosome a probable DNA-RuvA(4)-RuvB(12)-RuvC(2) complex forms which resolves the HJ.

It localises to the cytoplasm. Functionally, the RuvA-RuvB-RuvC complex processes Holliday junction (HJ) DNA during genetic recombination and DNA repair, while the RuvA-RuvB complex plays an important role in the rescue of blocked DNA replication forks via replication fork reversal (RFR). RuvA specifically binds to HJ cruciform DNA, conferring on it an open structure. The RuvB hexamer acts as an ATP-dependent pump, pulling dsDNA into and through the RuvAB complex. HJ branch migration allows RuvC to scan DNA until it finds its consensus sequence, where it cleaves and resolves the cruciform DNA. In Acinetobacter baumannii (strain ACICU), this protein is Holliday junction branch migration complex subunit RuvA.